A 97-amino-acid polypeptide reads, in one-letter code: uncharacterized protein (97 aa).

This is an uncharacterized protein from Escherichia coli O6:K15:H31 (strain 536 / UPEC).